A 558-amino-acid polypeptide reads, in one-letter code: Potassium-transporting ATPase potassium-binding subunit 1 (558 aa).

12 consecutive transmembrane segments (helical) span residues 1-21 (MEIILFLTMMVMITYVFSGYL), 66-86 (FNGFMGFITFVLLIVQQWLFL), 127-147 (MIVMTYLMFTSSASGYAVCIA), 166-186 (IVRFIVRVLLPLSCLISILLM), 245-265 (IWSNFIEMGSMMLLPMSMLFL), 281-301 (ALILFVAMFFIFIAILTLTMW), 327-347 (FGAGLSALFTVITTAFTTGSV), 354-374 (LTPIGGLGPMVLMMLNVVFGG), 377-397 (VGLMNLLIFVLLTVFICSLMV), 416-436 (IVLVFLIHPILILVFSALAFM), 482-502 (ISTGIIMLLSRYIPIILQLMI), and 531-551 (IVFIVLLSGLTFIPVLLLGPI).

Belongs to the KdpA family. The system is composed of three essential subunits: KdpA, KdpB and KdpC.

Its subcellular location is the cell membrane. Its function is as follows. Part of the high-affinity ATP-driven potassium transport (or Kdp) system, which catalyzes the hydrolysis of ATP coupled with the electrogenic transport of potassium into the cytoplasm. This subunit binds the extracellular potassium ions and delivers the ions to the membrane domain of KdpB through an intramembrane tunnel. The protein is Potassium-transporting ATPase potassium-binding subunit 1 of Staphylococcus aureus (strain Mu50 / ATCC 700699).